The following is a 1642-amino-acid chain: Mitochondrial 3' processome subunit 2 (1642 aa).

Residues 1–27 constitute a mitochondrion transit peptide; it reads MGLPFLCHTRVCLFSNKIPFVLCGSRF. 2 disordered regions span residues 43 to 69 and 745 to 772; these read ETLN…PQKK and KGEK…LSGP. The segment covering 49–65 has biased composition (polar residues); it reads ELSSPSTSKEPSVGSDS.

In terms of assembly, component of the mitochondrial 3' processome (MPsome) complex composed at least of terminal uridylyltransferase KRET1/TUT1, 3'-5' exonuclease DSS1, MPSS1, MPSS2 and MPSS3. Within the complex, interacts with DSS1.

The protein localises to the mitochondrion. In terms of biological role, as part of the mitochondrial 3' processome (MPsome), involved in the maturation of guided RNA (gRNA) precursors. This chain is Mitochondrial 3' processome subunit 2, found in Trypanosoma brucei brucei.